A 2324-amino-acid polypeptide reads, in one-letter code: Myomegalin (2324 aa).

4 coiled-coil regions span residues Arg-41–Ala-132, Gln-158–Glu-205, Asp-238–Glu-288, and Leu-348–Ala-638. 2 disordered regions span residues Thr-72 to Gln-96 and Glu-205 to His-240. Residues Ala-85–Gln-96 show a composition bias toward basic and acidic residues. A compositionally biased stretch (polar residues) spans Pro-219 to Asp-238. The disordered stretch occupies residues Pro-701–Ser-747. Thr-705 carries the post-translational modification Phosphothreonine. Basic and acidic residues predominate over residues Ser-724–Ser-738. Coiled-coil stretches lie at residues Gly-745–Asp-822, Glu-855–Leu-923, and Leu-1011–Ser-1043. Disordered stretches follow at residues Leu-1155 to Leu-1182 and Asn-1195 to His-1216. Coiled coils occupy residues Ser-1213–Thr-1241, Thr-1346–Thr-1384, and Gly-1430–Gly-1455. 6 disordered regions span residues Thr-1540–Ala-1559, Arg-1589–Ser-1610, Tyr-1628–Pro-1685, Ala-1742–Arg-1773, Leu-1857–Ser-1877, and Asn-2081–Lys-2140. Positions Lys-1550–Ser-1641 constitute an Olduvai domain. Low complexity-rich tracts occupy residues Ser-1591–Ser-1610 and Ser-1637–Ser-1646. Positions Pro-1743–Gln-1767 are enriched in polar residues. Positions Gly-1821–Asp-2056 form a coiled coil. Composition is skewed to polar residues over residues Asn-2081–Ala-2090 and Pro-2108–Thr-2135. Positions Glu-2248–Thr-2274 form a coiled coil.

In terms of assembly, interacts with PDE4D. May interact with MAPRE1 and MAPRE3. May form a pericentrosomal complex with AKAP9, CDK5RAP2 and EB1/MAPRE1 in an isoform-specific manner; within this complex, may mediate MAPRE1-binding to CDK5RAP2. Interaction with AKAP9 stabilizes both proteins. May interact with CAMSAP2 in an isoform-specific manner; this interaction is much stronger in the presence of AKAP9. In complex with AKAP9, recruits CAMSAP2 to the Golgi apparatus. May interact with unglycosylated LGALS3BP in an isoform-specific manner; this interaction may connect the pericentrosomal complex to the gamma-tubulin ring complex (gamma-TuRC) to promote microtubule assembly and acetylation. Abundantly expressed in heart and skeletal muscle and to a lower extent in brain, lung and liver. Expressed in heart, skeletal muscle and testis (at protein level).

The protein localises to the cytoplasm. Its subcellular location is the cytoskeleton. It localises to the microtubule organizing center. It is found in the centrosome. The protein resides in the golgi apparatus. In terms of biological role, functions as an anchor sequestering components of the cAMP-dependent pathway to Golgi and/or centrosomes. May participate in microtubule dynamics, promoting microtubule assembly, in an isoform-specific manner. Depending upon the cell context, may act at the level of the Golgi apparatus or that of the centrosome. In complex with AKAP9, recruits CAMSAP2 to the Golgi apparatus and tethers non-centrosomal minus-end microtubules to the Golgi, an important step for polarized cell movement. In complex with AKAP9, EB1/MAPRE1 and CDK5RAP2, contributes to microtubules nucleation and extension from the centrosome to the cell periphery, a crucial process for directed cell migration, mitotic spindle orientation and cell-cycle progression. The polypeptide is Myomegalin (Pde4dip) (Rattus norvegicus (Rat)).